A 428-amino-acid chain; its full sequence is Glutamyl-tRNA reductase (428 aa).

Substrate is bound by residues 49–52 (TCNR), Ser107, 112–114 (EPQ), and Gln118. Cys50 serves as the catalytic Nucleophile. Residue 187–192 (GAGETI) coordinates NADP(+).

The protein belongs to the glutamyl-tRNA reductase family. Homodimer.

It carries out the reaction (S)-4-amino-5-oxopentanoate + tRNA(Glu) + NADP(+) = L-glutamyl-tRNA(Glu) + NADPH + H(+). It functions in the pathway porphyrin-containing compound metabolism; protoporphyrin-IX biosynthesis; 5-aminolevulinate from L-glutamyl-tRNA(Glu): step 1/2. Its function is as follows. Catalyzes the NADPH-dependent reduction of glutamyl-tRNA(Glu) to glutamate 1-semialdehyde (GSA). The polypeptide is Glutamyl-tRNA reductase (Pseudomonas fluorescens (strain Pf0-1)).